The primary structure comprises 328 residues: Gonadotropin-releasing hormone receptor (328 aa).

Topologically, residues 1–38 (MANSASPEQNQNHCSAINSSILLTQGNLPTLTLSGKIR) are extracellular. A glycan (N-linked (GlcNAc...) asparagine) is linked at asparagine 18. A helical transmembrane segment spans residues 39-58 (VTVTFFLFLLSTAFNASFLL). Topologically, residues 59–77 (KLQKWTQRKEKGKKLSRMK) are cytoplasmic. A helical membrane pass occupies residues 78–97 (VLLKHLTLANLLETLIVMPL). Residues 98–115 (DGMWNITVQWYAGEFLCK) are Extracellular-facing. An N-linked (GlcNAc...) asparagine glycan is attached at asparagine 102. Cysteine 114 and cysteine 196 are oxidised to a cystine. The helical transmembrane segment at 116–137 (VLSYLKLFSMYAPAFMMVVISL) threads the bilayer. Residues 138–164 (DRSLAITRPLAVKSNSRLGRFMIGLAW) lie on the Cytoplasmic side of the membrane. A helical transmembrane segment spans residues 165-184 (LLSSIFAGPQLYIFRMIHLA). At 185–212 (DSSGQTEGFSQCVTHGSFPQWWHQAFYN) the chain is on the extracellular side. The chain crosses the membrane as a helical span at residues 213–232 (FFTFSCLFIIPLLIMLICNA). Topologically, residues 233 to 281 (KIMFTLTRVLQQDPHNLQLNQSKNNIPRARLRTLKMTVAFAASFIVCWT) are cytoplasmic. Residues 282 to 300 (PYYVLGIWYWFDPEMVNRV) traverse the membrane as a helical segment. Residues 301-306 (SDPVNH) are Extracellular-facing. Residues 307 to 326 (FFFLFAFLNPCFDPLIYGYF) form a helical membrane-spanning segment. Residues 327-328 (SL) are Cytoplasmic-facing.

Belongs to the G-protein coupled receptor 1 family. In terms of tissue distribution, pituitary gland.

It is found in the cell membrane. In terms of biological role, receptor for gonadotropin releasing hormone (GnRH) that mediates the action of GnRH to stimulate the secretion of the gonadotropic hormones luteinizing hormone (LH) and follicle-stimulating hormone (FSH). This receptor mediates its action by association with G-proteins that activate a phosphatidylinositol-calcium second messenger system. The sequence is that of Gonadotropin-releasing hormone receptor (GNRHR) from Sus scrofa (Pig).